Consider the following 318-residue polypeptide: Protein FdhE homolog (318 aa).

The protein belongs to the FdhE family.

The protein localises to the cytoplasm. In terms of biological role, necessary for formate dehydrogenase activity. This chain is Protein FdhE homolog, found in Pseudomonas putida (strain ATCC 47054 / DSM 6125 / CFBP 8728 / NCIMB 11950 / KT2440).